The chain runs to 425 residues: Monoacylglycerol lipase ABHD2 (425 aa).

Residues 1-9 (MNAMLETPE) lie on the Cytoplasmic side of the membrane. The helical; Signal-anchor for type II membrane protein transmembrane segment at 10–30 (LPAVFDGVKLAAVAAVLYVIV) threads the bilayer. Over 31 to 425 (RCLNLKSPTA…DTEQVEADLE (395 aa)) the chain is Extracellular. The 255-residue stretch at 128–382 (MVICPGIANH…HGGHLGFFEG (255 aa)) folds into the AB hydrolase-1 domain. Asn-136 carries an N-linked (GlcNAc...) asparagine glycan. Ser-207 functions as the Nucleophile in the catalytic mechanism. Residues Asp-345 and His-376 each act as charge relay system in the active site.

It belongs to the AB hydrolase superfamily. AB hydrolase 4 family. In terms of tissue distribution, present in sperm (at protein level).

It localises to the cell projection. The protein localises to the cilium. It is found in the flagellum membrane. Its subcellular location is the cell membrane. It catalyses the reaction an acetyl ester + H2O = an aliphatic alcohol + acetate + H(+). The enzyme catalyses Hydrolyzes glycerol monoesters of long-chain fatty acids.. It carries out the reaction a triacylglycerol + H2O = a diacylglycerol + a fatty acid + H(+). The catalysed reaction is 2-(5Z,8Z,11Z,14Z-eicosatetraenoyl)-glycerol + H2O = glycerol + (5Z,8Z,11Z,14Z)-eicosatetraenoate + H(+). It catalyses the reaction a butanoate ester + H2O = an aliphatic alcohol + butanoate + H(+). The enzyme catalyses hexadecanoate ester + H2O = an aliphatic alcohol + hexadecanoate + H(+). Acylglycerol lipase activity is activated upon binding to progesterone. In terms of biological role, progesterone-dependent acylglycerol lipase that catalyzes hydrolysis of endocannabinoid arachidonoylglycerol (AG) from cell membrane. Acts as a progesterone receptor: progesterone-binding activates the acylglycerol lipase activity, mediating degradation of 1-arachidonoylglycerol (1AG) and 2-arachidonoylglycerol (2AG) to glycerol and arachidonic acid (AA). Also displays an ester hydrolase activity against acetyl ester, butanoate ester and hexadecanoate ester. Plays a key role in sperm capacitation in response to progesterone by mediating degradation of 2AG, an inhibitor of the sperm calcium channel CatSper, leading to calcium influx via CatSper and sperm activation. May also play a role in smooth muscle cells migration. This chain is Monoacylglycerol lipase ABHD2, found in Homo sapiens (Human).